The sequence spans 122 residues: Large ribosomal subunit protein uL14 (122 aa).

Belongs to the universal ribosomal protein uL14 family. As to quaternary structure, part of the 50S ribosomal subunit. Forms a cluster with proteins L3 and L19. In the 70S ribosome, L14 and L19 interact and together make contacts with the 16S rRNA in bridges B5 and B8.

Its function is as follows. Binds to 23S rRNA. Forms part of two intersubunit bridges in the 70S ribosome. In Clostridium kluyveri (strain ATCC 8527 / DSM 555 / NBRC 12016 / NCIMB 10680 / K1), this protein is Large ribosomal subunit protein uL14.